The chain runs to 100 residues: Small ribosomal subunit protein uS14c (100 aa).

This sequence belongs to the universal ribosomal protein uS14 family. In terms of assembly, part of the 30S ribosomal subunit.

The protein resides in the plastid. It is found in the chloroplast. Functionally, binds 16S rRNA, required for the assembly of 30S particles. The polypeptide is Small ribosomal subunit protein uS14c (Emiliania huxleyi (Coccolithophore)).